Here is a 651-residue protein sequence, read N- to C-terminus: Epithelial sodium channel subunit beta (651 aa).

Residues 1-50 (MFLKRWFIRALHRLQKGPGYGYSELFVWYCNNTNTHGPKRLIIEGPKKKT) lie on the Cytoplasmic side of the membrane. Residues 51 to 71 (LWSLFTVTFACLVFWQWGLLI) form a helical membrane-spanning segment. The Extracellular segment spans residues 72-541 (QTYLSWGVSV…GGQFGFWMGG (470 aa)). Disulfide bonds link Cys98–Cys281, Cys205–Cys212, Cys258–Cys265, Cys370–Cys457, Cys395–Cys453, Cys399–Cys449, Cys408–Cys435, and Cys410–Cys424. Residues 542–562 (SVLCIIEFGEVFIDCIWIAVI) form a helical membrane-spanning segment. The Cytoplasmic portion of the chain corresponds to 563-651 (RFVKWYKNRK…TEHHSDSEDL (89 aa)). Positions 612–651 (QPPDLYLPTTLEIPGTPPPKYDSLRVHPIDTEHHSDSEDL) are disordered. Positions 633 to 651 (DSLRVHPIDTEHHSDSEDL) are enriched in basic and acidic residues.

Belongs to the amiloride-sensitive sodium channel (TC 1.A.6) family. SCNN1B subfamily. As to quaternary structure, component of the heterotrimeric epithelial sodium channel (ENaC) composed of an alpha/SCNN1A, a beta/SCNN1B and a gamma/SCNN1G subunit. In terms of tissue distribution, strongly expressed in gill, kidney and rectum and more weakly in brain, eye, liver and muscle.

Its subcellular location is the apical cell membrane. The protein resides in the cytoplasmic vesicle membrane. The catalysed reaction is Na(+)(in) = Na(+)(out). Originally identified and characterized by its inhibition by the diuretic drug amiloride. This is one of the three pore-forming subunits of the heterotrimeric epithelial sodium channel (ENaC), a critical regulator of sodium balance and fluid homeostasis. ENaC operates in epithelial tissues, where it mediates the electrodiffusion of sodium ions from extracellular fluid through the apical membrane of cells, with water following osmotically. This Neoceratodus forsteri (Australian lungfish) protein is Epithelial sodium channel subunit beta.